We begin with the raw amino-acid sequence, 70 residues long: Large ribosomal subunit protein uL30 (70 aa).

It belongs to the universal ribosomal protein uL30 family. Part of the 50S ribosomal subunit.

In Renibacterium salmoninarum (strain ATCC 33209 / DSM 20767 / JCM 11484 / NBRC 15589 / NCIMB 2235), this protein is Large ribosomal subunit protein uL30.